The primary structure comprises 236 residues: Uridylate kinase (236 aa).

10–13 (KLSG) contacts ATP. Glycine 52 contributes to the UMP binding site. Residues glycine 53 and arginine 57 each coordinate ATP. UMP contacts are provided by residues aspartate 72 and 133–140 (TGNPFFTT). Residues threonine 160, tyrosine 166, and aspartate 169 each contribute to the ATP site.

It belongs to the UMP kinase family. As to quaternary structure, homohexamer.

Its subcellular location is the cytoplasm. It carries out the reaction UMP + ATP = UDP + ADP. Its pathway is pyrimidine metabolism; CTP biosynthesis via de novo pathway; UDP from UMP (UMPK route): step 1/1. Inhibited by UTP. In terms of biological role, catalyzes the reversible phosphorylation of UMP to UDP. This is Uridylate kinase from Cupriavidus necator (strain ATCC 17699 / DSM 428 / KCTC 22496 / NCIMB 10442 / H16 / Stanier 337) (Ralstonia eutropha).